A 663-amino-acid polypeptide reads, in one-letter code: Methionine--tRNA ligase (663 aa).

The 'HIGH' region signature appears at 10–20 (AYTNGPLHLGH). Residues Cys142, Cys145, Cys154, and Cys157 each coordinate Zn(2+). Residues 323–327 (KMSTS) carry the 'KMSKS' region motif. Thr326 is a binding site for ATP. Residues 563–663 (YFGNIDLRVG…RDLPVGSKIH (101 aa)) enclose the tRNA-binding domain.

It belongs to the class-I aminoacyl-tRNA synthetase family. MetG type 1 subfamily. As to quaternary structure, homodimer. It depends on Zn(2+) as a cofactor.

It is found in the cytoplasm. The catalysed reaction is tRNA(Met) + L-methionine + ATP = L-methionyl-tRNA(Met) + AMP + diphosphate. Its function is as follows. Is required not only for elongation of protein synthesis but also for the initiation of all mRNA translation through initiator tRNA(fMet) aminoacylation. The sequence is that of Methionine--tRNA ligase from Methanococcus maripaludis (strain C5 / ATCC BAA-1333).